The chain runs to 513 residues: Ectonucleoside triphosphate diphosphohydrolase 1 (513 aa).

Topologically, residues 1-16 are cytoplasmic; sequence MEDRRESELKVFCSKN. Residues 17–37 traverse the membrane as a helical segment; the sequence is ILSILGFSCIIAVIALLALGL. At 38–481 the chain is on the extracellular side; it reads TQNKALPENV…SPPLPHSTYV (444 aa). N-linked (GlcNAc...) asparagine glycosylation is present at Asn-73. Glu-174 (proton acceptor) is an active-site residue. N-linked (GlcNAc...) asparagine glycosylation is found at Asn-227 and Asn-245. Intrachain disulfides connect Cys-255–Cys-300 and Cys-281–Cys-327. 2 N-linked (GlcNAc...) asparagine glycosylation sites follow: Asn-307 and Asn-336. Residues Cys-340 and Cys-345 are joined by a disulfide bond. Residue Asn-373 is glycosylated (N-linked (GlcNAc...) asparagine). Cysteines 393 and 416 form a disulfide. N-linked (GlcNAc...) asparagine glycosylation is present at Asn-460. A helical membrane pass occupies residues 482–502; sequence FLMVLFSLILLAVIIVGIVVF. Over 503–513 the chain is Cytoplasmic; sequence HKPSYFWKDMV.

This sequence belongs to the GDA1/CD39 NTPase family. Homodimer; disulfide-linked. It depends on Ca(2+) as a cofactor. Mg(2+) is required as a cofactor. Post-translationally, N-glycosylated. The N-terminus is blocked. In terms of processing, palmitoylated on Cys-13; which is required for caveola targeting.

It localises to the membrane. It is found in the caveola. It catalyses the reaction a ribonucleoside 5'-triphosphate + 2 H2O = a ribonucleoside 5'-phosphate + 2 phosphate + 2 H(+). The catalysed reaction is a ribonucleoside 5'-triphosphate + H2O = a ribonucleoside 5'-diphosphate + phosphate + H(+). It carries out the reaction a ribonucleoside 5'-diphosphate + H2O = a ribonucleoside 5'-phosphate + phosphate + H(+). The enzyme catalyses ATP + 2 H2O = AMP + 2 phosphate + 2 H(+). It catalyses the reaction ATP + H2O = ADP + phosphate + H(+). The catalysed reaction is ADP + H2O = AMP + phosphate + H(+). It carries out the reaction CTP + 2 H2O = CMP + 2 phosphate + 2 H(+). The enzyme catalyses CTP + H2O = CDP + phosphate + H(+). It catalyses the reaction CDP + H2O = CMP + phosphate + H(+). The catalysed reaction is GTP + 2 H2O = GMP + 2 phosphate + 2 H(+). It carries out the reaction GTP + H2O = GDP + phosphate + H(+). The enzyme catalyses GDP + H2O = GMP + phosphate + H(+). It catalyses the reaction ITP + 2 H2O = IMP + 2 phosphate + 2 H(+). The catalysed reaction is ITP + H2O = IDP + phosphate + H(+). It carries out the reaction IDP + H2O = IMP + phosphate + H(+). The enzyme catalyses UTP + 2 H2O = UMP + 2 phosphate + 2 H(+). It catalyses the reaction UTP + H2O = UDP + phosphate + H(+). The catalysed reaction is UDP + H2O = UMP + phosphate + H(+). In terms of biological role, catalyzes the hydrolysis of both di- and triphosphate nucleotides (NDPs and NTPs) and hydrolyze NTPs to nucleotide monophosphates (NMPs) in two distinct successive phosphate-releasing steps, with NDPs as intermediates and participates in the regulation of extracellular levels of nucleotides. By hydrolyzing proinflammatory ATP and platelet-activating ADP to AMP, it blocks platelet aggregation and supports blood flow. The polypeptide is Ectonucleoside triphosphate diphosphohydrolase 1 (Bos taurus (Bovine)).